The chain runs to 366 residues: Methyltransferase phm5 (366 aa).

S-adenosyl-L-methionine contacts are provided by residues 204 to 205, D230, 255 to 256, R273, and R274; these read GG and SM.

It belongs to the class I-like SAM-binding methyltransferase superfamily. Cation-independent O-methyltransferase family.

The protein operates within secondary metabolite biosynthesis. Methyltransferase; part of the gene cluster that mediates the biosynthesis of the trans-fused decalin-containing tetramic acid phomasetin, the stereochemical opposite of the HIV-1 integrase inhibitor equisetin. The PKS module of phm1 together with the enoylreductase phm4 catalyze the formation of the polyketide unit which is then conjugated to L-serine by the condensation domain of the phm1 NRPS module. Activity of the Dieckmann cyclase domain (RED) of phm1 results in release of the Dieckmann product intermediate. The Diels-Alderase phm7 then uses the Dieckmann product of phm1 as substrate and catalyzes the Diels-Alder cycloaddition to form the decalin ring of N-desmethylphomasetin. N-desmethylphomasetin is further methylated to phomasetin by the methyltransferase phm5. In Pyrenochaetopsis sp, this protein is Methyltransferase phm5.